A 152-amino-acid chain; its full sequence is Ribosome maturation factor RimP (152 aa).

Belongs to the RimP family.

It localises to the cytoplasm. In terms of biological role, required for maturation of 30S ribosomal subunits. The sequence is that of Ribosome maturation factor RimP from Yersinia pestis.